A 147-amino-acid polypeptide reads, in one-letter code: D-aminoacyl-tRNA deacylase (147 aa).

The Gly-cisPro motif, important for rejection of L-amino acids signature appears at 137–138 (GP).

The protein belongs to the DTD family. Homodimer.

It localises to the cytoplasm. The enzyme catalyses glycyl-tRNA(Ala) + H2O = tRNA(Ala) + glycine + H(+). It catalyses the reaction a D-aminoacyl-tRNA + H2O = a tRNA + a D-alpha-amino acid + H(+). In terms of biological role, an aminoacyl-tRNA editing enzyme that deacylates mischarged D-aminoacyl-tRNAs. Also deacylates mischarged glycyl-tRNA(Ala), protecting cells against glycine mischarging by AlaRS. Acts via tRNA-based rather than protein-based catalysis; rejects L-amino acids rather than detecting D-amino acids in the active site. By recycling D-aminoacyl-tRNA to D-amino acids and free tRNA molecules, this enzyme counteracts the toxicity associated with the formation of D-aminoacyl-tRNA entities in vivo and helps enforce protein L-homochirality. The polypeptide is D-aminoacyl-tRNA deacylase (Bacillus licheniformis (strain ATCC 14580 / DSM 13 / JCM 2505 / CCUG 7422 / NBRC 12200 / NCIMB 9375 / NCTC 10341 / NRRL NRS-1264 / Gibson 46)).